Here is a 385-residue protein sequence, read N- to C-terminus: MASATVTKTNIGVYTNPKHDLWIADSSPTAEDINAGKGLKAGEVTIEVRSTGICGSDVHFWHAGCIGPMIVTGDHVLGHESAGQVLAVAPDVTHLKVGDRVAVEPNVICNACEPCLTGRYNGCVNVAFLSTPPVDGLLRRYVNHPAVWCHKIGDMSYEDGAMLEPLSVTLAAIERSGLRLGDPLLITGAGPIGLISLLSARAAGACPIVITDIDEGRLAFAKSLVPEVRTYKVEIGKSAEECADGIINALNDGQGSGPDALRPKLALECTGVESSVNSAIWSVKFGGKVFVIGVGKNEMTIPFMRLSTQEIDLQYQYRYCNTWPRAIRLIQNGVIDLSKLVTHRYSLENALQAFETASNPKTGAIKVQIMSSEEDVKAATAGQKY.

Zn(2+)-binding residues include C54, H79, E80, C109, C112, C115, C123, and E164. Residues 191–192 (PI), D212, R217, I292, and 316–318 (QYR) contribute to the NAD(+) site.

Belongs to the zinc-containing alcohol dehydrogenase family. Homotetramer. It depends on Zn(2+) as a cofactor.

The enzyme catalyses L-arabinitol + NAD(+) = L-xylulose + NADH + H(+). It functions in the pathway carbohydrate degradation; L-arabinose degradation via L-arabinitol; D-xylulose 5-phosphate from L-arabinose (fungal route): step 2/5. In terms of biological role, catalyzes the NAD-dependent oxidation of L-arabinitol to L-xylulose in the fungal L-arabinose catabolic pathway. L-arabinose catabolism is important for using plant material as a carbon source. NADP cannot act as a cosubstrate. This is L-arabinitol 4-dehydrogenase (lad1) from Penicillium rubens (strain ATCC 28089 / DSM 1075 / NRRL 1951 / Wisconsin 54-1255) (Penicillium chrysogenum).